A 388-amino-acid polypeptide reads, in one-letter code: ATP phosphoribosyltransferase regulatory subunit (388 aa).

This sequence belongs to the class-II aminoacyl-tRNA synthetase family. HisZ subfamily. Heteromultimer composed of HisG and HisZ subunits.

It is found in the cytoplasm. Its pathway is amino-acid biosynthesis; L-histidine biosynthesis; L-histidine from 5-phospho-alpha-D-ribose 1-diphosphate: step 1/9. Functionally, required for the first step of histidine biosynthesis. May allow the feedback regulation of ATP phosphoribosyltransferase activity by histidine. This Acinetobacter baumannii (strain AB307-0294) protein is ATP phosphoribosyltransferase regulatory subunit.